Reading from the N-terminus, the 110-residue chain is MSTSGPRAFSSRFASFIDKVRWSLLQQQKSNMDNMFESYINNLRDVDEAYMNKVELESRLEGLTDEINFLRQIHEEEIRSLDMDSIIAEVRHGDDLRRLALDIEIATYRK.

Residues 1–12 (MSTSGPRAFSSR) form a head region. In terms of domain architecture, IF rod spans 1-110 (MSTSGPRAFS…LDIEIATYRK (110 aa)). Serine 2, serine 4, serine 10, and serine 11 each carry phosphoserine. Arginine 12 bears the Omega-N-methylarginine mark. Residues 13-25 (FASFIDKVRWSLL) form a coil 1A region. Residues 26–39 (QQQKSNMDNMFESY) form a linker 1 region. Lysine 29 is covalently cross-linked (Glycyl lysine isopeptide (Lys-Gly) (interchain with G-Cter in SUMO2)). Positions 40–79 (INNLRDVDEAYMNKVELESRLEGLTDEINFLRQIHEEEIR) are coil 1B. Lysine 53 carries the N6-acetyllysine modification. Residues serine 80 and serine 85 each carry the phosphoserine modification. The linker 12 stretch occupies residues 80 to 86 (SLDMDSI). Residues 87–110 (IAEVRHGDDLRRLALDIEIATYRK) form a coil 2 region. Residues 88–99 (AEVRHGDDLRRL) are necessary for interaction with PNN. Lysine 110 is covalently cross-linked (Glycyl lysine isopeptide (Lys-Gly) (interchain with G-Cter in SUMO2)).

Belongs to the intermediate filament family. Heterotetramer of two type I and two type II keratins. Forms a heterodimer with KRT18. Associates with KRT20. Interacts with PNN. When associated with KRT19, interacts with DMD. Interacts with TCHP. Interacts with APEX1. Interacts with GPER1. Interacts with EPPK1. Interacts with PKP1 and PKP2. Post-translationally, O-glycosylated. O-GlcNAcylation at multiple sites increases solubility, and decreases stability by inducing proteasomal degradation. O-glycosylated (O-GlcNAcylated), in a cell cycle-dependent manner.

The protein localises to the cytoplasm. Its subcellular location is the nucleus. It is found in the nucleoplasm. The protein resides in the nucleus matrix. Functionally, together with KRT19, helps to link the contractile apparatus to dystrophin at the costameres of striated muscle. This Mesocricetus auratus (Golden hamster) protein is Keratin, type II cytoskeletal 8.